A 492-amino-acid chain; its full sequence is Aspartyl/glutamyl-tRNA(Asn/Gln) amidotransferase subunit B (492 aa).

This sequence belongs to the GatB/GatE family. GatB subfamily. Heterotrimer of A, B and C subunits.

It catalyses the reaction L-glutamyl-tRNA(Gln) + L-glutamine + ATP + H2O = L-glutaminyl-tRNA(Gln) + L-glutamate + ADP + phosphate + H(+). It carries out the reaction L-aspartyl-tRNA(Asn) + L-glutamine + ATP + H2O = L-asparaginyl-tRNA(Asn) + L-glutamate + ADP + phosphate + 2 H(+). In terms of biological role, allows the formation of correctly charged Asn-tRNA(Asn) or Gln-tRNA(Gln) through the transamidation of misacylated Asp-tRNA(Asn) or Glu-tRNA(Gln) in organisms which lack either or both of asparaginyl-tRNA or glutaminyl-tRNA synthetases. The reaction takes place in the presence of glutamine and ATP through an activated phospho-Asp-tRNA(Asn) or phospho-Glu-tRNA(Gln). This is Aspartyl/glutamyl-tRNA(Asn/Gln) amidotransferase subunit B from Pelagibacter ubique (strain HTCC1062).